The following is a 653-amino-acid chain: MAAAAASHLNLDALREVLECPICMESFTEEQLRPKLLHCGHTICRQCLEKLLASSINGVRCPFCSKITRITSLTQLTDNLTVLKIIDTAGLSEAVGLLMCRSCGRRLPRQFCRSCGLVLCEPCREADHQPPGHCTLPVKEAAEERRRDFGEKLTRLRELMGELQRRKAALEGVSKDLQARYKAVLQEYGHEERRVQDELARSRKFFTGSLAEVEKSNSQVVEEQSYLLNIAEVQAVSRCDYFLAKIKQADVALLEETADEEEPELTASLPRELTLQDVELLKVGHVGPLQIGQAVKKPRTVNVEDSWAMEATASAASTSVTFREMDMSPEEVVASPRASPAKQRGPEAASNIQQCLFLKKMGAKGSTPGMFNLPVSLYVTSQGEVLVADRGNYRIQVFTRKGFLKEIRRSPSGIDSFVLSFLGADLPNLTPLSVAMNCQGLIGVTDSYDNSLKVYTLDGHCVACHRSQLSKPWGITALPSGQFVVTDVEGGKLWCFTVDRGSGVVKYSCLCSAVRPKFVTCDAEGTVYFTQGLGLNLENRQNEHHLEGGFSIGSVGPDGQLGRQISHFFSENEDFRCIAGMCVDARGDLIVADSSRKEILHFPKGGGYSVLIREGLTCPVGIALTPKGQLLVLDCWDHCIKIYSYHLRRYSTP.

Ala-2 is subject to N-acetylalanine. Residues 20–65 form an RING-type zinc finger; it reads CPICMESFTEEQLRPKLLHCGHTICRQCLEKLLASSINGVRCPFCS. Ser-55 is modified (phosphoserine; by CHEK2). Zn(2+) contacts are provided by Cys-100, Cys-103, Cys-123, and His-128. The B box-type zinc-finger motif lies at 103–133; it reads CGRRLPRQFCRSCGLVLCEPCREADHQPPGH. Residues 138–197 are a coiled coil; that stretch reads VKEAAEERRRDFGEKLTRLRELMGELQRRKAALEGVSKDLQARYKAVLQEYGHEERRVQD. Residues Ser-328, Ser-335, and Ser-339 each carry the phosphoserine modification. NHL repeat units follow at residues 358 to 401, 415 to 458, 459 to 499, 562 to 605, and 606 to 646; these read LKKM…FTRK, DSFV…YTLD, GHCV…FTVD, GRQI…FPKG, and GGYS…YSYH.

It belongs to the TRIM/RBCC family. In terms of assembly, it self-associates. Interacts with DTNBP1. Interacts with PIAS4/PIASY upon treatment with UVB and TNF-alpha. Interacts with AMBRA1; promoting activation of ULK1 through unanchored 'Lys-63'-linked polyubiquitin chains. Interacts with TICAM1 and TAX1BP1; these interactions target TICAM1 to TAX1BP1-mediated selective autophagic degradation. (Microbial infection) Interacts with S.typhimurium protein SseK3; SseK3 does not glycosylate TRIM32. Post-translationally, ubiquitinated. Phosphorylation at Ser-55 by CHEK2 under oxidative stress, activates the E3 ligase activity and promotes ATG7 ubiquitination leading to positive regulation of the autophagosme assembly. As to expression, spleen, thymus, prostate, testis, ovary, intestine, colon and skeletal muscle.

Its subcellular location is the cytoplasm. The protein resides in the mitochondrion. It is found in the endoplasmic reticulum. The enzyme catalyses S-ubiquitinyl-[E2 ubiquitin-conjugating enzyme]-L-cysteine + [acceptor protein]-L-lysine = [E2 ubiquitin-conjugating enzyme]-L-cysteine + N(6)-ubiquitinyl-[acceptor protein]-L-lysine.. Its pathway is protein modification; protein ubiquitination. In terms of biological role, E3 ubiquitin ligase that plays a role in various biological processes including neural stem cell differentiation, innate immunity, inflammatory resonse and autophagy. Plays a role in virus-triggered induction of IFN-beta and TNF-alpha by mediating the ubiquitination of STING1. Mechanistically, targets STING1 for 'Lys-63'-linked ubiquitination which promotes the interaction of STING1 with TBK1. Regulates bacterial clearance and promotes autophagy in Mycobacterium tuberculosis-infected macrophages. Negatively regulates TLR3/4-mediated innate immune and inflammatory response by triggering the autophagic degradation of TICAM1 in an E3 activity-independent manner. Plays an essential role in oxidative stress induced cell death by inducing loss of transmembrane potential and enhancing mitochondrial reactive oxygen species (ROS) production during oxidative stress conditions. Ubiquitinates XIAP and targets it for proteasomal degradation. Ubiquitinates DTNBP1 (dysbindin) and promotes its degradation. May ubiquitinate BBS2. Ubiquitinates PIAS4/PIASY and promotes its degradation in keratinocytes treated with UVB and TNF-alpha. Also acts as a regulator of autophagy by mediating formation of unanchored 'Lys-63'-linked polyubiquitin chains that activate ULK1: interaction with AMBRA1 is required for ULK1 activation. Positively regulates dendritic branching by promoting ubiquitination and subsequent degradation of the epigenetic factor CDYL. Under metabolic stress and phosphorylation by CHK2, mediates 'Lys-63'-linked ubiquitination of ATG7 at 'Lys-45' to initiate autophagy. Its function is as follows. (Microbial infection) May play a significant role in mediating the biological activity of the HIV-1 Tat protein in vivo. Binds specifically to the activation domain of HIV-1 Tat and can also interact with the HIV-2 and EIAV Tat proteins in vivo. The protein is E3 ubiquitin-protein ligase TRIM32 of Homo sapiens (Human).